Here is a 1409-residue protein sequence, read N- to C-terminus: Protein three rows (1409 aa).

Residues 1052–1058 (VEPIRKQ) form a separase cleavage-site region. Disordered regions lie at residues 1260–1284 (PIGCSNSSSSSSKSGNENTPPSDHV) and 1297–1409 (DDAA…RQRN). Low complexity-rich tracts occupy residues 1264–1273 (SNSSSSSSKS) and 1300–1310 (ASVSASTPAPS).

In terms of assembly, interacts with pim and Sse. Cleavage of thr contributes to inactivation of Sse.

The protein resides in the cytoplasm. Functionally, required specifically for chromosome disjunction during all mitoses; maternally provided protein is sufficient until mitosis 14 then zygotic protein is required. Involved in formation and/or maintenance of epithelial structures: bud extension during Malpighian tubule development, and foregut and hindgut morphogenesis. This Drosophila pseudoobscura pseudoobscura (Fruit fly) protein is Protein three rows (thr).